A 57-amino-acid chain; its full sequence is Cecropin-A (57 aa).

The first 21 residues, 1 to 21, serve as a signal peptide directing secretion; sequence IFFFVFACLLALSAVSAAPEP.

The protein belongs to the cecropin family.

It localises to the secreted. In terms of biological role, cecropins have lytic and antibacterial activity against several Gram-positive and Gram-negative bacteria. This is Cecropin-A (CECA) from Spodoptera litura (Asian cotton leafworm).